Here is a 204-residue protein sequence, read N- to C-terminus: High frequency lysogenization protein HflD homolog (204 aa).

It belongs to the HflD family.

Its subcellular location is the cytoplasm. It localises to the cell inner membrane. The polypeptide is High frequency lysogenization protein HflD homolog (Aeromonas hydrophila subsp. hydrophila (strain ATCC 7966 / DSM 30187 / BCRC 13018 / CCUG 14551 / JCM 1027 / KCTC 2358 / NCIMB 9240 / NCTC 8049)).